The chain runs to 125 residues: Small ribosomal subunit protein eS8 (125 aa).

The protein belongs to the eukaryotic ribosomal protein eS8 family. Part of the 30S ribosomal subunit.

This is Small ribosomal subunit protein eS8 from Methanosphaerula palustris (strain ATCC BAA-1556 / DSM 19958 / E1-9c).